The sequence spans 256 residues: Small ribosomal subunit protein eS1 (256 aa).

Positions 1–18 are enriched in basic residues; sequence MAVGKNKRLSKGKKGLKK. A disordered region spans residues 1 to 20; the sequence is MAVGKNKRLSKGKKGLKKRT. Ala2 bears the N-acetylalanine; partial mark.

It belongs to the eukaryotic ribosomal protein eS1 family. In terms of assembly, component of the small ribosomal subunit. Mature ribosomes consist of a small (40S) and a large (60S) subunit. The 40S subunit contains about 33 different proteins and 1 molecule of RNA (18S). The 60S subunit contains about 49 different proteins and 3 molecules of RNA (25S, 5.8S and 5S).

The protein resides in the cytoplasm. The protein is Small ribosomal subunit protein eS1 (rps1) of Talaromyces marneffei (strain ATCC 18224 / CBS 334.59 / QM 7333) (Penicillium marneffei).